The sequence spans 403 residues: uncharacterized protein (403 aa).

2 helical membrane-spanning segments follow: residues 29-49 (FVIF…CGFL) and 55-75 (AFIA…FFGC).

Belongs to the chlamydial CPn_0129/CT_036/TC_0306 family.

It is found in the cell membrane. This is an uncharacterized protein from Chlamydia trachomatis serovar D (strain ATCC VR-885 / DSM 19411 / UW-3/Cx).